We begin with the raw amino-acid sequence, 268 residues long: Very-long-chain aldehyde decarbonylase GL1-8 (268 aa).

4 helical membrane passes run 26–46 (IGTFLLHESVFFLSGLPSLLF), 70–90 (CVVRLVLYHVCVNLPLTILSY), 107–127 (WTVVVSQVLFFFVLEDFIFYW), and 164–184 (ILFLGFATVAGPALTGPHLFT). One can recognise a Fatty acid hydroxylase domain in the interval 114-249 (VLFFFVLEDF…FIYMDWLFGT (136 aa)).

This sequence belongs to the sterol desaturase family. In terms of assembly, homodimer.

It is found in the endoplasmic reticulum membrane. It catalyses the reaction a long-chain fatty aldehyde + 2 NADPH + O2 + H(+) = a long-chain alkane + formate + 2 NADP(+) + H2O. Its function is as follows. Aldehyde decarbonylase involved in the conversion of aldehydes to alkanes. Core component of a very-long-chain alkane synthesis complex. This is Very-long-chain aldehyde decarbonylase GL1-8 from Oryza sativa subsp. indica (Rice).